The chain runs to 850 residues: Protein stoned-A (850 aa).

The segment covering 1 to 16 has biased composition (basic residues); sequence MLKLPKGLKKKKKKSK. Disordered stretches follow at residues 1 to 95 and 125 to 164; these read MLKL…AAGG and KESF…LGQI. Residues 26–290 form an interaction with Syt region; that stretch reads ELEQYKRDLK…QNLLLSESIE (265 aa). Basic and acidic residues predominate over residues 28–38; that stretch reads EQYKRDLKAKQ. Residues 78–91 are compositionally biased toward polar residues; the sequence is ILNAQQQLSDQNQG. Over residues 136–164 the composition is skewed to basic and acidic residues; sequence AEKKKQKEEEAARLEAEQQEREKQRLGQI. A DPF 1 motif is present at residues 224-226; that stretch reads DPF. Disordered stretches follow at residues 345–375 and 412–498; these read EEEE…EEDD and GSWA…PPFL. The span at 431–440 shows a compositional bias: pro residues; sequence PPPPVRPPTG. Over residues 451 to 462 the composition is skewed to acidic residues; that stretch reads SEDEEENPEDDP. 2 consecutive short sequence motifs (DPF) follow at residues 461–463 and 535–537; these read DPF. Disordered regions lie at residues 573–610, 634–673, 738–760, and 800–825; these read HSLS…QRKS, GNEL…TSHV, RKKL…FDTS, and LGLG…IDPF. Basic and acidic residues-rich tracts occupy residues 574–588 and 596–607; these read SLSD…DQKE and LEQKETDFDTAQ. Short sequence motifs (DPF) lie at residues 666–668, 755–757, and 823–825; these read DPF.

In terms of assembly, interacts with the second C2 domain of Syt.

It localises to the cytoplasm. It is found in the synapse. Its subcellular location is the cytoplasmic vesicle. The protein localises to the secretory vesicle. The protein resides in the synaptic vesicle. Functionally, adapter protein involved in endocytic recycling of synaptic vesicles membranes. May act by mediating the retrieval of synaptotagmin protein Syt from the plasma membrane, thereby facilitating the internalization of multiple synaptic vesicles from the plasma membrane. In Drosophila melanogaster (Fruit fly), this protein is Protein stoned-A (stnA).